The primary structure comprises 466 residues: Argininosuccinate lyase (466 aa).

The protein belongs to the lyase 1 family. Argininosuccinate lyase subfamily.

Its subcellular location is the cytoplasm. It catalyses the reaction 2-(N(omega)-L-arginino)succinate = fumarate + L-arginine. Its pathway is amino-acid biosynthesis; L-arginine biosynthesis; L-arginine from L-ornithine and carbamoyl phosphate: step 3/3. In Bartonella tribocorum (strain CIP 105476 / IBS 506), this protein is Argininosuccinate lyase.